The sequence spans 339 residues: D-alanine--D-alanine ligase (339 aa).

The 208-residue stretch at 126–333 (KQVLASVGMP…YSELVTRLVE (208 aa)) folds into the ATP-grasp domain. 158-213 (AGELGYPLFVKPANLGSSVGISKVSGPGELERALDLAFSLGRRVILEAMTAHKPRE) is a binding site for ATP. Residues aspartate 286, glutamate 300, and asparagine 302 each coordinate Mg(2+).

The protein belongs to the D-alanine--D-alanine ligase family. Requires Mg(2+) as cofactor. Mn(2+) is required as a cofactor.

Its subcellular location is the cytoplasm. The enzyme catalyses 2 D-alanine + ATP = D-alanyl-D-alanine + ADP + phosphate + H(+). The protein operates within cell wall biogenesis; peptidoglycan biosynthesis. Cell wall formation. The sequence is that of D-alanine--D-alanine ligase from Deinococcus geothermalis (strain DSM 11300 / CIP 105573 / AG-3a).